We begin with the raw amino-acid sequence, 809 residues long: Zygotic DNA replication licensing factor mcm3 (809 aa).

An MCM domain is found at 297-504 (IFEQLSRSLA…QDREISDHVL (208 aa)). 347 to 354 (GDPSVAKS) provides a ligand contact to ATP. The Arginine finger motif lies at 479 to 482 (SRFD). The tract at residues 664–741 (KKRRRRDEDS…TDSSAKPGLS (78 aa)) is disordered. Residues 696 to 705 (AQEGESHDPY) show a composition bias toward basic and acidic residues.

It belongs to the MCM family. As to quaternary structure, component of the mcm2-7 complex (RLF-M). The complex forms a toroidal hexameric ring with the proposed subunit order mcm2-mcm6-mcm4-mcm7-mcm3-mcm5. Component of the CMG helicase complex, composed of the mcm2-7 complex, the GINS complex and cdc45.

Its subcellular location is the nucleus. The protein localises to the chromosome. The enzyme catalyses ATP + H2O = ADP + phosphate + H(+). Acts as a component of the MCM2-7 complex (MCM complex) which is the putative replicative helicase essential for 'once per cell cycle' DNA replication initiation and elongation in eukaryotic cells. The active ATPase sites in the MCM2-7 ring are formed through the interaction surfaces of two neighboring subunits such that a critical structure of a conserved arginine finger motif is provided in trans relative to the ATP-binding site of the Walker A box of the adjacent subunit. The six ATPase active sites, however, are likely to contribute differentially to the complex helicase activity. The existence of maternal and zygotic forms of mcm3 and mcm6 suggests that specific forms of mcm2-7 complexes may be used during different stages of development. This Xenopus tropicalis (Western clawed frog) protein is Zygotic DNA replication licensing factor mcm3 (zmcm3).